The chain runs to 1208 residues: Spindle pole body protein pcp1 (1208 aa).

A compositionally biased stretch (basic and acidic residues) spans 1–17 (MSERDFNTQSPKFKDEN). The segment at 1–91 (MSERDFNTQS…DKYNGSLGDK (91 aa)) is disordered. Polar residues predominate over residues 48–64 (NDKSSFQTPLRNGSYQP). Coiled-coil stretches lie at residues 151-375 (LREQ…KENQ), 387-803 (TDSM…ANIE), 874-1091 (GTET…QSTQ), and 1177-1204 (ERMK…AKAK). At serine 906 the chain carries Phosphoserine.

In terms of assembly, interacts with ccq1.

The protein resides in the nucleus. It is found in the cytoplasm. Its subcellular location is the cytoskeleton. It localises to the microtubule organizing center. The protein localises to the spindle pole body. In terms of biological role, spindle pole body component that binds calmodulin. Overexpression of pcp1 causes the formation of supernumerary SPB-like structures and disrupts both mitotic spindle assembly and chromosome segregation. The protein is Spindle pole body protein pcp1 (pcp1) of Schizosaccharomyces pombe (strain 972 / ATCC 24843) (Fission yeast).